A 657-amino-acid chain; its full sequence is Glycogen debranching enzyme (657 aa).

Residue Asp334 is the Nucleophile of the active site. Catalysis depends on Glu369, which acts as the Proton donor. The tract at residues 458-485 (ANGEQNRDGTNSNFSFNHGTEGLEADET) is disordered. Positions 465–475 (DGTNSNFSFNH) are enriched in polar residues.

It belongs to the glycosyl hydrolase 13 family.

Its subcellular location is the cytoplasm. The enzyme catalyses Hydrolysis of (1-&gt;6)-alpha-D-glucosidic linkages to branches with degrees of polymerization of three or four glucose residues in limit dextrin.. Its pathway is glycan degradation; glycogen degradation. Slightly activated by Ca(2+). Inhibited by divalent cations such as Zn(2+), Cu(2+), Fe(2+), Mg(2+), Mn(2+), but only slightly inhibited by EDTA. Its function is as follows. Removes maltotriose and maltotetraose chains that are attached by 1,6-alpha-linkage to the limit dextrin main chain, generating a debranched limit dextrin. Hydrolyzes the alpha-1,6-glycosidic linkages in amylopectin while does not hydrolyze the alpha-1,4-glycosidic linkages in amylose. Native glycogen is a poor substrate. The chain is Glycogen debranching enzyme from Dickeya chrysanthemi (Pectobacterium chrysanthemi).